A 227-amino-acid polypeptide reads, in one-letter code: Glutathione S-transferase U7 (227 aa).

The GST N-terminal domain maps to 8–87; the sequence is EEVKLLGMWA…YIDETWRDNP (80 aa). Glutathione contacts are provided by residues 18–19, 44–45, 58–59, and 71–72; these read SP, NK, MI, and ES. Positions 92-215 constitute a GST C-terminal domain; sequence DPYERTMARF…PPEDEHLKYI (124 aa).

This sequence belongs to the GST superfamily. Tau family.

The protein resides in the cytoplasm. It is found in the cytosol. The catalysed reaction is RX + glutathione = an S-substituted glutathione + a halide anion + H(+). Functionally, may be involved in the conjugation of reduced glutathione to a wide number of exogenous and endogenous hydrophobic electrophiles and have a detoxification role against certain herbicides. In Arabidopsis thaliana (Mouse-ear cress), this protein is Glutathione S-transferase U7 (GSTU7).